The sequence spans 367 residues: Chorismate synthase (367 aa).

Arginine 48 is a binding site for NADP(+). FMN-binding positions include 125–127 (RAS), glycine 290, 305–309 (KPTSS), and arginine 333.

It belongs to the chorismate synthase family. In terms of assembly, homotetramer. Requires FMNH2 as cofactor.

It carries out the reaction 5-O-(1-carboxyvinyl)-3-phosphoshikimate = chorismate + phosphate. It functions in the pathway metabolic intermediate biosynthesis; chorismate biosynthesis; chorismate from D-erythrose 4-phosphate and phosphoenolpyruvate: step 7/7. Catalyzes the anti-1,4-elimination of the C-3 phosphate and the C-6 proR hydrogen from 5-enolpyruvylshikimate-3-phosphate (EPSP) to yield chorismate, which is the branch point compound that serves as the starting substrate for the three terminal pathways of aromatic amino acid biosynthesis. This reaction introduces a second double bond into the aromatic ring system. This is Chorismate synthase from Protochlamydia amoebophila (strain UWE25).